Here is a 468-residue protein sequence, read N- to C-terminus: MSQGKIVQIIGAVVDVEFPRNEVPKVYHALKVEGTEITLEVQQQLGDGVVRTIALGSTDGLKRNLLATNTERAISVPVGAGTLGRIMDVLGRPIDEAGDVQASDHWEIHRGAPSYEDQSSSTELLETGIKVIDLMCPFAKGGKVGLFGGAGVGKTVNMMELINNIAKAHSGLSVFAGVGERTREGNDFYHEMKDSNVLDKVAMVYGQMNEPPGNRLRVALTGLTMAEYFRDEKDANGKGKDVLLFVDNIYRYTLAGTEVSALLGRMPSAVGYQPTLAEEMGVLQERITSTKSGSITSIQAVYVPADDLTDPSPATTFAHLDSTVTLSRNIASLGIYPAVDPLDSTSRQMDPLVIGHEHYDTAQRVQQTLQKYKELKDIIAILGMDELSEEDKQSVSRARKIERFFSQPFHVAEVFTGSPGKYVSLKDTIRGFKAICDGEYDHLPEQAFYMVGSIEEAVEKANKMSAKA.

148 to 155 (GGAGVGKT) provides a ligand contact to ATP.

This sequence belongs to the ATPase alpha/beta chains family. As to quaternary structure, F-type ATPases have 2 components, CF(1) - the catalytic core - and CF(0) - the membrane proton channel. CF(1) has five subunits: alpha(3), beta(3), gamma(1), delta(1), epsilon(1). CF(0) has three main subunits: a(1), b(2) and c(9-12). The alpha and beta chains form an alternating ring which encloses part of the gamma chain. CF(1) is attached to CF(0) by a central stalk formed by the gamma and epsilon chains, while a peripheral stalk is formed by the delta and b chains.

It localises to the cell inner membrane. It carries out the reaction ATP + H2O + 4 H(+)(in) = ADP + phosphate + 5 H(+)(out). Functionally, produces ATP from ADP in the presence of a proton gradient across the membrane. The catalytic sites are hosted primarily by the beta subunits. This is ATP synthase subunit beta from Xanthomonas oryzae pv. oryzae (strain KACC10331 / KXO85).